Reading from the N-terminus, the 239-residue chain is O-antigen export system ATP-binding protein RfbE (239 aa).

The ABC transporter domain occupies 28–239; sequence VRVSTGGRIG…LIYEESMDIL (212 aa). Residue 66-73 coordinates ATP; that stretch reads GHNGAGKS.

Belongs to the ABC transporter superfamily.

Its subcellular location is the cell inner membrane. May form an ATP-driven O-antigen export apparatus, in association with RfbD. This chain is O-antigen export system ATP-binding protein RfbE (rfbE), found in Yersinia enterocolitica.